The following is a 221-amino-acid chain: Large ribosomal subunit protein uL4 (221 aa).

Residues 48-77 are disordered; it reads TASTKTRGEVSGGGRKPWIQKHTGRARQGS.

The protein belongs to the universal ribosomal protein uL4 family. In terms of assembly, part of the 50S ribosomal subunit.

Its function is as follows. One of the primary rRNA binding proteins, this protein initially binds near the 5'-end of the 23S rRNA. It is important during the early stages of 50S assembly. It makes multiple contacts with different domains of the 23S rRNA in the assembled 50S subunit and ribosome. Forms part of the polypeptide exit tunnel. The protein is Large ribosomal subunit protein uL4 of Thermosipho africanus (strain TCF52B).